Consider the following 501-residue polypeptide: Solute carrier family 2, facilitated glucose transporter member 5 (501 aa).

Met-1 is subject to N-acetylmethionine. The Cytoplasmic portion of the chain corresponds to 1–18 (MEPQDPVKREGRLTPVIV). The helical transmembrane segment at 19–39 (LATLIAAFGSSFQYGYNVAAI) threads the bilayer. Residue Tyr-32 coordinates D-fructose. Over 40-68 (NSPSEFMKDFYNYTYYDRVGEYMNEFYLT) the chain is Extracellular. N-linked (GlcNAc...) asparagine glycosylation occurs at Asn-51. Residues 69–91 (LLWSVTVSMFPFGGFLGSLMVGP) form a helical membrane-spanning segment. The Cytoplasmic portion of the chain corresponds to 92–98 (LVNNLGR). A helical transmembrane segment spans residues 99–119 (KGTLLFNNIFSIVPALLMGFS). Topologically, residues 120-126 (ELAKSFE) are extracellular. The chain crosses the membrane as a helical span at residues 127–149 (MIIVARVLVGICAGLSSNVVPMY). Topologically, residues 150–161 (LGELAPKNWRGA) are cytoplasmic. The chain crosses the membrane as a helical span at residues 162-182 (LGVVPQLFITIGILVAQIFGL). Gln-167 provides a ligand contact to D-fructose. Topologically, residues 183–192 (RSLLANEEGW) are extracellular. Residues 193-213 (PILLGLTGIPAVLQLLFLPFF) traverse the membrane as a helical segment. Residues 214 to 277 (PESPRYLLIQ…LFKMRSLRWQ (64 aa)) lie on the Cytoplasmic side of the membrane. Residues 278-298 (VISIIVLMAGQQLSGVNAIYY) traverse the membrane as a helical segment. Residues Gln-288 and 296–298 (IYY) contribute to the D-fructose site. At 299–313 (YADQIYLSAGVNEDD) the chain is on the extracellular side. A helical membrane pass occupies residues 314-334 (VQYVTAGTGAVNVLITVCAIF). Residues 335-342 (VVELMGRR) are Cytoplasmic-facing. The chain crosses the membrane as a helical span at residues 343–363 (FLLLLGFSVCFTACCVLTGAL). The Extracellular portion of the chain corresponds to 364-371 (ALQDVISW). A helical transmembrane segment spans residues 372–394 (MPYVSIACVISYVIGHALGPSPI). His-387 serves as a coordination point for D-fructose. The Cytoplasmic portion of the chain corresponds to 395 to 412 (PALLVTEIFLQSSRPAAY). Residues 413-433 (MVAGTVHWLSNFTVGLVFPFI) traverse the membrane as a helical segment. 419–420 (HW) is a D-fructose binding site. The Extracellular portion of the chain corresponds to 434–439 (QVGLGA). Residues 440-460 (YSFVIFAVICLLTTVYIFLII) traverse the membrane as a helical segment. Over 461–501 (PETKSKTFIEINRIFIKMNKVPGVHPEKEELKEFPPSTARQ) the chain is Cytoplasmic.

The protein belongs to the major facilitator superfamily. Sugar transporter (TC 2.A.1.1) family. Glucose transporter subfamily.

It is found in the apical cell membrane. Its subcellular location is the cell membrane. The protein resides in the sarcolemma. It carries out the reaction D-fructose(out) = D-fructose(in). Functions as a fructose transporter that has only low activity with other monosaccharides. Can mediate the uptake of deoxyglucose, but with low efficiency. Essential for fructose uptake in the small intestine. Plays a role in the regulation of salt uptake and blood pressure in response to dietary fructose. Required for the development of high blood pressure in response to high dietary fructose intake. This Bos taurus (Bovine) protein is Solute carrier family 2, facilitated glucose transporter member 5.